We begin with the raw amino-acid sequence, 571 residues long: Putative F-box protein At5g39460 (571 aa).

In terms of domain architecture, F-box spans 9 to 55 (ACLLLTLPEDVFAVISRFLSPSDICNLILCGKSLCALVDSEKTWLVQ).

This chain is Putative F-box protein At5g39460, found in Arabidopsis thaliana (Mouse-ear cress).